Reading from the N-terminus, the 885-residue chain is Translation initiation factor IF-2 (885 aa).

The segment covering 123–232 has biased composition (basic and acidic residues); the sequence is ETEAKAKAEA…EAERYSDHHI (110 aa). The interval 123–289 is disordered; the sequence is ETEAKAKAEA…RNRSTAPESM (167 aa). A compositionally biased stretch (basic residues) spans 253-266; the sequence is GRRARNKNTAKTKR. The span at 267 to 276 shows a compositional bias: basic and acidic residues; the sequence is GGKDARDGRE. A tr-type G domain is found at 385 to 554; that stretch reads PRAPVVTIMG…LLQAEVLELK (170 aa). The segment at 394–401 is G1; that stretch reads GHVDHGKT. Position 394 to 401 (394 to 401) interacts with GTP; that stretch reads GHVDHGKT. The tract at residues 419–423 is G2; it reads GITQH. Residues 440–443 are G3; sequence DTPG. GTP is bound by residues 440–444 and 494–497; these read DTPGH and NKMD. Residues 494-497 are G4; sequence NKMD. The interval 530-532 is G5; that stretch reads SAK.

The protein belongs to the TRAFAC class translation factor GTPase superfamily. Classic translation factor GTPase family. IF-2 subfamily.

It localises to the cytoplasm. Its function is as follows. One of the essential components for the initiation of protein synthesis. Protects formylmethionyl-tRNA from spontaneous hydrolysis and promotes its binding to the 30S ribosomal subunits. Also involved in the hydrolysis of GTP during the formation of the 70S ribosomal complex. This chain is Translation initiation factor IF-2, found in Shewanella oneidensis (strain ATCC 700550 / JCM 31522 / CIP 106686 / LMG 19005 / NCIMB 14063 / MR-1).